Here is a 260-residue protein sequence, read N- to C-terminus: Indole-3-glycerol phosphate synthase (260 aa).

The protein belongs to the TrpC family.

The catalysed reaction is 1-(2-carboxyphenylamino)-1-deoxy-D-ribulose 5-phosphate + H(+) = (1S,2R)-1-C-(indol-3-yl)glycerol 3-phosphate + CO2 + H2O. The protein operates within amino-acid biosynthesis; L-tryptophan biosynthesis; L-tryptophan from chorismate: step 4/5. The sequence is that of Indole-3-glycerol phosphate synthase from Koribacter versatilis (strain Ellin345).